Consider the following 167-residue polypeptide: UPF0179 protein Pars_2336 (167 aa).

It belongs to the UPF0179 family.

This Pyrobaculum arsenaticum (strain DSM 13514 / JCM 11321 / PZ6) protein is UPF0179 protein Pars_2336.